The primary structure comprises 302 residues: Ribosomal protein L11 methyltransferase (302 aa).

Positions 148, 169, 191, and 237 each coordinate S-adenosyl-L-methionine.

The protein belongs to the methyltransferase superfamily. PrmA family.

The protein resides in the cytoplasm. The catalysed reaction is L-lysyl-[protein] + 3 S-adenosyl-L-methionine = N(6),N(6),N(6)-trimethyl-L-lysyl-[protein] + 3 S-adenosyl-L-homocysteine + 3 H(+). Methylates ribosomal protein L11. This Desulfosudis oleivorans (strain DSM 6200 / JCM 39069 / Hxd3) (Desulfococcus oleovorans) protein is Ribosomal protein L11 methyltransferase.